The following is a 382-amino-acid chain: ADP,ATP carrier protein, mitochondrial (382 aa).

A mitochondrion-targeting transit peptide spans 1–71 (MAEQANQPTV…PMMSSSPIFA (71 aa)). Solcar repeat units lie at residues 80–173 (KNFM…FKRL), 185–277 (KWFG…LKPV), and 285–371 (DNFF…LQIL). Transmembrane regions (helical) follow at residues 82-109 (FMID…VKLL), 150-174 (TANV…KRLF), 183-203 (YWKW…SSLF), 253-274 (FNIS…YDSL), and 288-308 (FASF…SYPI). ADP contacts are provided by Arg-155 and Lys-167. Arg-312 is a binding site for ADP. An important for transport activity region spans residues 312 to 317 (RRRMMM). Residues 312-317 (RRRMMM) carry the Nucleotide carrier signature motif motif. A helical membrane pass occupies residues 348–368 (AGANILRAIAGAGVLSGYDQL).

It belongs to the mitochondrial carrier (TC 2.A.29) family. In terms of assembly, monomer.

Its subcellular location is the mitochondrion inner membrane. It carries out the reaction ADP(in) + ATP(out) = ADP(out) + ATP(in). The matrix-open state (m-state) is inhibited by the membrane-permeable bongkrekic acid (BKA). The cytoplasmic-open state (c-state) is inhibited by the membrane-impermeable toxic inhibitor carboxyatractyloside (CATR). Functionally, ADP:ATP antiporter that mediates import of ADP into the mitochondrial matrix for ATP synthesis, and export of ATP out to fuel the cell. Cycles between the cytoplasmic-open state (c-state) and the matrix-open state (m-state): operates by the alternating access mechanism with a single substrate-binding site intermittently exposed to either the cytosolic (c-state) or matrix (m-state) side of the inner mitochondrial membrane. This is ADP,ATP carrier protein, mitochondrial from Oryza sativa subsp. japonica (Rice).